Here is a 434-residue protein sequence, read N- to C-terminus: 3-phosphoshikimate 1-carboxyvinyltransferase (434 aa).

Lys-15, Ser-16, and Arg-20 together coordinate 3-phosphoshikimate. A phosphoenolpyruvate-binding site is contributed by Lys-15. Residues Gly-96 and Arg-124 each coordinate phosphoenolpyruvate. 3-phosphoshikimate-binding residues include Ser-169, Gln-171, Ser-195, Asp-319, and Lys-346. Gln-171 provides a ligand contact to phosphoenolpyruvate. Asp-319 (proton acceptor) is an active-site residue. Residues Arg-350 and Arg-394 each coordinate phosphoenolpyruvate.

The protein belongs to the EPSP synthase family. Monomer.

The protein resides in the cytoplasm. It catalyses the reaction 3-phosphoshikimate + phosphoenolpyruvate = 5-O-(1-carboxyvinyl)-3-phosphoshikimate + phosphate. It participates in metabolic intermediate biosynthesis; chorismate biosynthesis; chorismate from D-erythrose 4-phosphate and phosphoenolpyruvate: step 6/7. Its function is as follows. Catalyzes the transfer of the enolpyruvyl moiety of phosphoenolpyruvate (PEP) to the 5-hydroxyl of shikimate-3-phosphate (S3P) to produce enolpyruvyl shikimate-3-phosphate and inorganic phosphate. The chain is 3-phosphoshikimate 1-carboxyvinyltransferase from Chlorobaculum parvum (strain DSM 263 / NCIMB 8327) (Chlorobium vibrioforme subsp. thiosulfatophilum).